Consider the following 133-residue polypeptide: Small ribosomal subunit protein uS19 (133 aa).

The protein belongs to the universal ribosomal protein uS19 family. As to quaternary structure, part of the 30S ribosomal subunit.

Its function is as follows. Protein S19 forms a complex with S13 that binds strongly to the 16S ribosomal RNA. This is Small ribosomal subunit protein uS19 from Thermococcus kodakarensis (strain ATCC BAA-918 / JCM 12380 / KOD1) (Pyrococcus kodakaraensis (strain KOD1)).